The following is a 214-amino-acid chain: Ribosomal RNA small subunit methyltransferase G (214 aa).

Residues glycine 77, phenylalanine 82, 128-129 (VE), and arginine 143 contribute to the S-adenosyl-L-methionine site.

Belongs to the methyltransferase superfamily. RNA methyltransferase RsmG family.

It localises to the cytoplasm. The enzyme catalyses guanosine(527) in 16S rRNA + S-adenosyl-L-methionine = N(7)-methylguanosine(527) in 16S rRNA + S-adenosyl-L-homocysteine. Functionally, specifically methylates the N7 position of guanine in position 527 of 16S rRNA. The sequence is that of Ribosomal RNA small subunit methyltransferase G from Nitrosomonas europaea (strain ATCC 19718 / CIP 103999 / KCTC 2705 / NBRC 14298).